The primary structure comprises 357 residues: UDP-N-acetylglucosamine--N-acetylmuramyl-(pentapeptide) pyrophosphoryl-undecaprenol N-acetylglucosamine transferase (357 aa).

Residues 13 to 15 (TGG), Asn125, Arg161, Ser189, Ile243, and Gln288 contribute to the UDP-N-acetyl-alpha-D-glucosamine site.

It belongs to the glycosyltransferase 28 family. MurG subfamily.

Its subcellular location is the cell inner membrane. The enzyme catalyses di-trans,octa-cis-undecaprenyl diphospho-N-acetyl-alpha-D-muramoyl-L-alanyl-D-glutamyl-meso-2,6-diaminopimeloyl-D-alanyl-D-alanine + UDP-N-acetyl-alpha-D-glucosamine = di-trans,octa-cis-undecaprenyl diphospho-[N-acetyl-alpha-D-glucosaminyl-(1-&gt;4)]-N-acetyl-alpha-D-muramoyl-L-alanyl-D-glutamyl-meso-2,6-diaminopimeloyl-D-alanyl-D-alanine + UDP + H(+). It functions in the pathway cell wall biogenesis; peptidoglycan biosynthesis. Cell wall formation. Catalyzes the transfer of a GlcNAc subunit on undecaprenyl-pyrophosphoryl-MurNAc-pentapeptide (lipid intermediate I) to form undecaprenyl-pyrophosphoryl-MurNAc-(pentapeptide)GlcNAc (lipid intermediate II). The polypeptide is UDP-N-acetylglucosamine--N-acetylmuramyl-(pentapeptide) pyrophosphoryl-undecaprenol N-acetylglucosamine transferase (Bordetella petrii (strain ATCC BAA-461 / DSM 12804 / CCUG 43448)).